A 185-amino-acid chain; its full sequence is Elongation factor P (185 aa).

Belongs to the elongation factor P family.

Its subcellular location is the cytoplasm. It participates in protein biosynthesis; polypeptide chain elongation. Its function is as follows. Involved in peptide bond synthesis. Stimulates efficient translation and peptide-bond synthesis on native or reconstituted 70S ribosomes in vitro. Probably functions indirectly by altering the affinity of the ribosome for aminoacyl-tRNA, thus increasing their reactivity as acceptors for peptidyl transferase. The protein is Elongation factor P of Acaryochloris marina (strain MBIC 11017).